The sequence spans 304 residues: DDRGK domain-containing protein 1 (304 aa).

The Lumenal portion of the chain corresponds to 1–2 (MD). A helical transmembrane segment spans residues 3–23 (LIILVGIAIALLVVIISLYLL). At 24-304 (QKKNSTTEAK…LTPVSAEGSS (281 aa)) the chain is on the cytoplasmic side. The disordered stretch occupies residues 31–174 (EAKPAAAAPQ…AERLAKEERE (144 aa)). Positions 53–82 (RRAQIARNQRNRLRQNAPVAAAAPQAEAPA) are enriched in low complexity. A compositionally biased stretch (basic and acidic residues) spans 105 to 174 (LDEKMGAKKR…AERLAKEERE (70 aa)).

The protein belongs to the DDRGK1 family. As to quaternary structure, interacts with Atg9; the interaction is transient.

It is found in the endoplasmic reticulum membrane. Functionally, substrate adapter for ufmylation, the covalent attachment of the ubiquitin-like modifier UFM1 to substrate proteins. Required for ufmylation of Atg9; protects the nervous system during aging, possibly by stabilizing Atg9 and supporting its function. The chain is DDRGK domain-containing protein 1 from Drosophila ananassae (Fruit fly).